Reading from the N-terminus, the 352-residue chain is UDP-N-acetylglucosamine--N-acetylmuramyl-(pentapeptide) pyrophosphoryl-undecaprenol N-acetylglucosamine transferase (352 aa).

Residues 12-14 (TGG), Asn-124, Arg-160, Ser-188, and Gln-287 contribute to the UDP-N-acetyl-alpha-D-glucosamine site.

Belongs to the glycosyltransferase 28 family. MurG subfamily.

The protein resides in the cell inner membrane. It carries out the reaction di-trans,octa-cis-undecaprenyl diphospho-N-acetyl-alpha-D-muramoyl-L-alanyl-D-glutamyl-meso-2,6-diaminopimeloyl-D-alanyl-D-alanine + UDP-N-acetyl-alpha-D-glucosamine = di-trans,octa-cis-undecaprenyl diphospho-[N-acetyl-alpha-D-glucosaminyl-(1-&gt;4)]-N-acetyl-alpha-D-muramoyl-L-alanyl-D-glutamyl-meso-2,6-diaminopimeloyl-D-alanyl-D-alanine + UDP + H(+). It functions in the pathway cell wall biogenesis; peptidoglycan biosynthesis. Its function is as follows. Cell wall formation. Catalyzes the transfer of a GlcNAc subunit on undecaprenyl-pyrophosphoryl-MurNAc-pentapeptide (lipid intermediate I) to form undecaprenyl-pyrophosphoryl-MurNAc-(pentapeptide)GlcNAc (lipid intermediate II). In Dechloromonas aromatica (strain RCB), this protein is UDP-N-acetylglucosamine--N-acetylmuramyl-(pentapeptide) pyrophosphoryl-undecaprenol N-acetylglucosamine transferase.